The sequence spans 354 residues: Putative Xaa-Pro aminopeptidase (354 aa).

Mn(2+) is bound by residues Asp213, Asp224, His290, Glu319, and Glu333.

The protein belongs to the peptidase M24B family. Mn(2+) is required as a cofactor.

The catalysed reaction is Release of any N-terminal amino acid, including proline, that is linked to proline, even from a dipeptide or tripeptide.. The protein is Putative Xaa-Pro aminopeptidase (pepP) of Mycoplasma pneumoniae (strain ATCC 29342 / M129 / Subtype 1) (Mycoplasmoides pneumoniae).